An 84-amino-acid polypeptide reads, in one-letter code: Small ribosomal subunit protein eS27-like (84 aa).

Over residues 1-16 (MPLARDLLHPSLEEEK) the composition is skewed to basic and acidic residues. Residues 1-23 (MPLARDLLHPSLEEEKKKHKKKR) are disordered. The segment at 38–60 (PGCYKITTVFSHAQTVVLCVGCS) adopts a C4-type zinc-finger fold.

Belongs to the eukaryotic ribosomal protein eS27 family. The cofactor is Zn(2+).

In Mus musculus (Mouse), this protein is Small ribosomal subunit protein eS27-like.